Here is a 160-residue protein sequence, read N- to C-terminus: 6,7-dimethyl-8-ribityllumazine synthase (160 aa).

Residues tryptophan 28, 59 to 61 (SFE), and 82 to 84 (VII) contribute to the 5-amino-6-(D-ribitylamino)uracil site. 87 to 88 (GT) is a (2S)-2-hydroxy-3-oxobutyl phosphate binding site. Histidine 90 acts as the Proton donor in catalysis. 5-amino-6-(D-ribitylamino)uracil is bound at residue phenylalanine 115. (2S)-2-hydroxy-3-oxobutyl phosphate is bound at residue arginine 129.

This sequence belongs to the DMRL synthase family.

The enzyme catalyses (2S)-2-hydroxy-3-oxobutyl phosphate + 5-amino-6-(D-ribitylamino)uracil = 6,7-dimethyl-8-(1-D-ribityl)lumazine + phosphate + 2 H2O + H(+). The protein operates within cofactor biosynthesis; riboflavin biosynthesis; riboflavin from 2-hydroxy-3-oxobutyl phosphate and 5-amino-6-(D-ribitylamino)uracil: step 1/2. Its function is as follows. Catalyzes the formation of 6,7-dimethyl-8-ribityllumazine by condensation of 5-amino-6-(D-ribitylamino)uracil with 3,4-dihydroxy-2-butanone 4-phosphate. This is the penultimate step in the biosynthesis of riboflavin. The sequence is that of 6,7-dimethyl-8-ribityllumazine synthase from Clavibacter michiganensis subsp. michiganensis (strain NCPPB 382).